A 564-amino-acid polypeptide reads, in one-letter code: MSNPVRSKGGCWTCRLRRKKCDEGKPECTTCQALSITCYGYGPKPEWMDNGDAEKDVANSLKHIVRYTSRRTSSRYRVPPGQKANPKLAPKVHAAASTPSTNTSHSTETTPPSDNGFYDTAESPLSPNGAQHLTIATIPAEDSILLMHFLDKVFPLQYPMYRPDILEGGRGWLLALLLQTKSLYHAALALSSYHRRMLVFERISEQCRATAAVQQEKHLETCLNEVRQAMVILDQRTRQRKSYDGMGTVTSIVQLVFFELFAGQDHAWRTHLNAAIDVYDQNCRDKLEHLDLSEASKTILRNDQRLAVDGALVTQEVTTFRFMGGSIIWLDILSSLAAGSVPRLLSYHQGVLDAASQVKLENIMGCKNWLMCQIGRIAALQGHRRQDGWTSQRHGIKLHSIAADIKSEIESGMAREALESLNIQTSDSCGINNSSTNSVTLTTRMFAFMAIIHLHLVTHDFERLDNLRETIADAIRLLQSQVPCSMIPVIVAPLFIIGCVAAQGDEQSLFRASLASDTSQHRLYRHRKDVLSALEEIWSKRQTSTDYTWNDVLDMGQHKYLLFL.

A DNA-binding region (zn(2)-C6 fungal-type) is located at residues 11–38; that stretch reads CWTCRLRRKKCDEGKPECTTCQALSITC. The disordered stretch occupies residues 71 to 123; the sequence is RTSSRYRVPPGQKANPKLAPKVHAAASTPSTNTSHSTETTPPSDNGFYDTAES. The span at 97-113 shows a compositional bias: polar residues; the sequence is STPSTNTSHSTETTPPS.

It localises to the nucleus. Its function is as follows. Transcription factor that, with ptaR1 and ptaR2, coregulates the expression of the gene cluster that mediates the biosynthesis of pestheic acid, a diphenyl ether which is a biosynthetic precursor of the unique chloropupukeananes. The sequence is that of Pestheic acid cluster transcriptional regulator 3 from Pestalotiopsis fici (strain W106-1 / CGMCC3.15140).